The sequence spans 114 residues: UPF0145 protein PYRAB04900 (114 aa).

The protein belongs to the UPF0145 family.

In Pyrococcus abyssi (strain GE5 / Orsay), this protein is UPF0145 protein PYRAB04900.